Consider the following 672-residue polypeptide: DNA ligase (672 aa).

Residues 32 to 36 (DAEYD), 81 to 82 (SL), and E113 each bind NAD(+). K115 acts as the N6-AMP-lysine intermediate in catalysis. Residues R136, E173, K290, and K314 each coordinate NAD(+). Zn(2+) contacts are provided by C408, C411, C426, and C432. A BRCT domain is found at 592 to 672 (EIDSPFAGKT…EMIRLLGESS (81 aa)).

This sequence belongs to the NAD-dependent DNA ligase family. LigA subfamily. Requires Mg(2+) as cofactor. It depends on Mn(2+) as a cofactor.

The enzyme catalyses NAD(+) + (deoxyribonucleotide)n-3'-hydroxyl + 5'-phospho-(deoxyribonucleotide)m = (deoxyribonucleotide)n+m + AMP + beta-nicotinamide D-nucleotide.. DNA ligase that catalyzes the formation of phosphodiester linkages between 5'-phosphoryl and 3'-hydroxyl groups in double-stranded DNA using NAD as a coenzyme and as the energy source for the reaction. It is essential for DNA replication and repair of damaged DNA. This is DNA ligase from Yersinia enterocolitica serotype O:8 / biotype 1B (strain NCTC 13174 / 8081).